Consider the following 303-residue polypeptide: Cyclin-dependent kinase B1-1 (303 aa).

Residues 4–295 (YEKLEKVGEG…AKAAMEHPYF (292 aa)) form the Protein kinase domain. ATP-binding positions include 10 to 18 (VGEGTYGKV) and Lys33. At Thr14 the chain carries Phosphothreonine. Tyr15 is modified (phosphotyrosine). Asp136 functions as the Proton acceptor in the catalytic mechanism. A Phosphothreonine modification is found at Thr170.

This sequence belongs to the protein kinase superfamily. CMGC Ser/Thr protein kinase family. CDC2/CDKX subfamily. Expressed in actively dividing cells: root and shoot apical meristems, and young leaves.

The enzyme catalyses L-seryl-[protein] + ATP = O-phospho-L-seryl-[protein] + ADP + H(+). It catalyses the reaction L-threonyl-[protein] + ATP = O-phospho-L-threonyl-[protein] + ADP + H(+). The catalysed reaction is [DNA-directed RNA polymerase] + ATP = phospho-[DNA-directed RNA polymerase] + ADP + H(+). The protein is Cyclin-dependent kinase B1-1 (CDKB1-1) of Oryza sativa subsp. japonica (Rice).